The primary structure comprises 271 residues: Ribosomal RNA small subunit methyltransferase A (271 aa).

S-adenosyl-L-methionine-binding residues include Asn18, Leu20, Gly45, Glu66, Asp91, and Asn112.

It belongs to the class I-like SAM-binding methyltransferase superfamily. rRNA adenine N(6)-methyltransferase family. RsmA subfamily.

Its subcellular location is the cytoplasm. It carries out the reaction adenosine(1518)/adenosine(1519) in 16S rRNA + 4 S-adenosyl-L-methionine = N(6)-dimethyladenosine(1518)/N(6)-dimethyladenosine(1519) in 16S rRNA + 4 S-adenosyl-L-homocysteine + 4 H(+). Functionally, specifically dimethylates two adjacent adenosines (A1518 and A1519) in the loop of a conserved hairpin near the 3'-end of 16S rRNA in the 30S particle. May play a critical role in biogenesis of 30S subunits. The protein is Ribosomal RNA small subunit methyltransferase A of Vibrio atlanticus (strain LGP32) (Vibrio splendidus (strain Mel32)).